The chain runs to 245 residues: Retrovirus-related Pol polyprotein from type-1 retrotransposable element R1 (245 aa).

The 105-residue stretch at 1–105 (LKDGTGIVAA…VDLETYCNKA (105 aa)) folds into the Reverse transcriptase domain. A nucleic acid-binding endonuclease region spans residues 106 to 245 (EVRQKFREKE…IVRDDSNLEQ (140 aa)).

The enzyme catalyses DNA(n) + a 2'-deoxyribonucleoside 5'-triphosphate = DNA(n+1) + diphosphate. This Popillia japonica (Japanese beetle) protein is Retrovirus-related Pol polyprotein from type-1 retrotransposable element R1.